A 296-amino-acid chain; its full sequence is Haloalkane dehalogenase (296 aa).

The 125-residue stretch at 31–155 (PILFQHGNPT…QDRDLFQAFR (125 aa)) folds into the AB hydrolase-1 domain. The Nucleophile role is filled by Asp-108. Glu-132 functions as the Proton donor in the catalytic mechanism. His-272 serves as the catalytic Proton acceptor.

This sequence belongs to the haloalkane dehalogenase family. Type 2 subfamily. Monomer.

The protein localises to the periplasm. It catalyses the reaction 1-haloalkane + H2O = a halide anion + a primary alcohol + H(+). The enzyme catalyses (3R,6R)-1,3,4,6-tetrachlorocyclohexa-1,4-diene + 2 H2O = 2,5-dichlorocyclohexa-2,5-dien-1,4-diol + 2 chloride + 2 H(+). The protein operates within xenobiotic degradation; gamma-hexachlorocyclohexane degradation. Catalyzes hydrolytic cleavage of carbon-halogen bonds in halogenated aliphatic compounds, leading to the formation of the corresponding primary alcohols, halide ions and protons. Is involved in the degradation of the important environmental pollutant gamma-hexachlorocyclohexane (gamma-HCH or lindane) as it also catalyzes conversion of 1,3,4,6-tetrachloro-1,4-cyclohexadiene (1,4-TCDN) to 2,5-dichloro-2,5-cyclohexadiene-1,4-diol (2,5-DDOL) via the intermediate 2,4,5-trichloro-2,5-cyclohexadiene-1-ol (2,4,5-DNOL). This is Haloalkane dehalogenase from Sphingobium indicum (strain DSM 16412 / CCM 7286 / MTCC 6364 / B90A).